A 64-amino-acid chain; its full sequence is Large ribosomal subunit protein uL30 (64 aa).

This sequence belongs to the universal ribosomal protein uL30 family. As to quaternary structure, part of the 50S ribosomal subunit.

The chain is Large ribosomal subunit protein uL30 from Methylorubrum populi (strain ATCC BAA-705 / NCIMB 13946 / BJ001) (Methylobacterium populi).